The sequence spans 127 residues: Small ribosomal subunit protein eS8 (127 aa).

It belongs to the eukaryotic ribosomal protein eS8 family. Part of the 30S ribosomal subunit.

In Pyrococcus furiosus (strain ATCC 43587 / DSM 3638 / JCM 8422 / Vc1), this protein is Small ribosomal subunit protein eS8.